Reading from the N-terminus, the 299-residue chain is tRNA pseudouridine synthase B (299 aa).

The active-site Nucleophile is the Asp-38.

It belongs to the pseudouridine synthase TruB family. Type 1 subfamily.

It catalyses the reaction uridine(55) in tRNA = pseudouridine(55) in tRNA. Functionally, responsible for synthesis of pseudouridine from uracil-55 in the psi GC loop of transfer RNAs. This is tRNA pseudouridine synthase B from Pediococcus pentosaceus (strain ATCC 25745 / CCUG 21536 / LMG 10740 / 183-1w).